The chain runs to 298 residues: Ribosomal protein L11 methyltransferase (298 aa).

Residues Thr152, Gly173, Asp195, and Asn234 each coordinate S-adenosyl-L-methionine.

It belongs to the methyltransferase superfamily. PrmA family.

Its subcellular location is the cytoplasm. It catalyses the reaction L-lysyl-[protein] + 3 S-adenosyl-L-methionine = N(6),N(6),N(6)-trimethyl-L-lysyl-[protein] + 3 S-adenosyl-L-homocysteine + 3 H(+). In terms of biological role, methylates ribosomal protein L11. The polypeptide is Ribosomal protein L11 methyltransferase (Ralstonia nicotianae (strain ATCC BAA-1114 / GMI1000) (Ralstonia solanacearum)).